A 349-amino-acid chain; its full sequence is Protein RecA (349 aa).

65 to 72 contacts ATP; it reads GPESSGKT.

This sequence belongs to the RecA family.

The protein localises to the cytoplasm. Functionally, can catalyze the hydrolysis of ATP in the presence of single-stranded DNA, the ATP-dependent uptake of single-stranded DNA by duplex DNA, and the ATP-dependent hybridization of homologous single-stranded DNAs. It interacts with LexA causing its activation and leading to its autocatalytic cleavage. The protein is Protein RecA of Aliarcobacter butzleri (strain RM4018) (Arcobacter butzleri).